The chain runs to 530 residues: uncharacterized protein (530 aa).

A disordered region spans residues 1–33 (MNNMSLKFPDIAINSSESSDDEDPSSKNEKKDG). Residues 24-33 (PSSKNEKKDG) are compositionally biased toward basic and acidic residues. A run of 12 helical transmembrane segments spans residues 83-103 (FFILPIMCITYGMQYLDKTAV), 124-144 (WLSTIFYLGYMIAQYPAGYLL), 147-167 (FPISYFMFIAAFLWSACVLLM), 181-201 (FFSGVFEGCVNPAFVALTAMW), 211-231 (VVSWYAFNGVAIMVGALLGYG), 244-264 (YPFLVIGAISTAWSFVYLFFP), 323-343 (VTNAMSVFSALIIQGIGYSGI), 346-366 (TLLTLPSGAFAVAGMIASGIF), 375-395 (IPLAMTTSSLTIVGSIMIWKI), 404-424 (VVGVWLFCTISSGNAVILSLL), 436-456 (TVNATMFLFYSIGNIVSPQLF), and 471-491 (SLVSVCLFEGVLALLAFYYIF).

This sequence belongs to the major facilitator superfamily. Allantoate permease family.

It is found in the endoplasmic reticulum. Its subcellular location is the membrane. This is an uncharacterized protein from Schizosaccharomyces pombe (strain 972 / ATCC 24843) (Fission yeast).